An 876-amino-acid chain; its full sequence is DNA gyrase subunit A (876 aa).

The 499-residue stretch at 34-532 (LPDVRDGLKP…NSVDINIEDL (499 aa)) folds into the Topo IIA-type catalytic domain. The active-site O-(5'-phospho-DNA)-tyrosine intermediate is the Tyr122. The short motif at 559 to 565 (QRRGGKG) is the GyrA-box element. The disordered stretch occupies residues 844–876 (DEELDAIDGSAAEGDEDIAPEADTDDDIAEDEE). Residues 856–876 (EGDEDIAPEADTDDDIAEDEE) are compositionally biased toward acidic residues.

This sequence belongs to the type II topoisomerase GyrA/ParC subunit family. Heterotetramer, composed of two GyrA and two GyrB chains. In the heterotetramer, GyrA contains the active site tyrosine that forms a transient covalent intermediate with DNA, while GyrB binds cofactors and catalyzes ATP hydrolysis.

Its subcellular location is the cytoplasm. The enzyme catalyses ATP-dependent breakage, passage and rejoining of double-stranded DNA.. Its function is as follows. A type II topoisomerase that negatively supercoils closed circular double-stranded (ds) DNA in an ATP-dependent manner to modulate DNA topology and maintain chromosomes in an underwound state. Negative supercoiling favors strand separation, and DNA replication, transcription, recombination and repair, all of which involve strand separation. Also able to catalyze the interconversion of other topological isomers of dsDNA rings, including catenanes and knotted rings. Type II topoisomerases break and join 2 DNA strands simultaneously in an ATP-dependent manner. In Klebsiella oxytoca, this protein is DNA gyrase subunit A.